Reading from the N-terminus, the 226-residue chain is ATP synthase subunit a (226 aa).

Transmembrane regions (helical) follow at residues Leu-20–Pro-40, Phe-74–Phe-94, Leu-100–Ile-120, Leu-158–Gly-180, and Ile-197–Leu-217.

It belongs to the ATPase A chain family. As to quaternary structure, F-type ATPases have 2 components, CF(1) - the catalytic core - and CF(0) - the membrane proton channel. CF(1) has five subunits: alpha(3), beta(3), gamma(1), delta(1), epsilon(1). CF(0) has three main subunits: a, b and c.

The protein resides in the mitochondrion inner membrane. Functionally, mitochondrial membrane ATP synthase (F(1)F(0) ATP synthase or Complex V) produces ATP from ADP in the presence of a proton gradient across the membrane which is generated by electron transport complexes of the respiratory chain. F-type ATPases consist of two structural domains, F(1) - containing the extramembraneous catalytic core and F(0) - containing the membrane proton channel, linked together by a central stalk and a peripheral stalk. During catalysis, ATP synthesis in the catalytic domain of F(1) is coupled via a rotary mechanism of the central stalk subunits to proton translocation. Key component of the proton channel; it may play a direct role in the translocation of protons across the membrane. The chain is ATP synthase subunit a (ATP6) from Anopheles quadrimaculatus (Common malaria mosquito).